A 488-amino-acid polypeptide reads, in one-letter code: Stromelysin-3 (488 aa).

An N-terminal signal peptide occupies residues 1–31; that stretch reads MAPAAWLRSAAARALLPPMLLLLLQPPPLLA. A propeptide spans 32–97 (activation peptide); that stretch reads RALPPDAHHL…GLSARNRQKR (66 aa). A disordered region spans residues 41–93; it reads LHAERRGPQPWHAALPSSPAPAPATQEAPRPASSLRPPRCGVPDPSDGLSARN. The segment covering 50 to 79 has biased composition (low complexity); it reads PWHAALPSSPAPAPATQEAPRPASSLRPPR. Positions 78-85 match the Cysteine switch motif; sequence PRCGVPDP. The Zn(2+) site is built by Cys80 and Asp166. Residues Asp171, Gly172, Gly174, and Ile176 each coordinate Ca(2+). Residues His179, His192, and His215 each contribute to the Zn(2+) site. The active site involves Glu216. 2 residues coordinate Zn(2+): His219 and His225. Hemopexin repeat units lie at residues 291-339, 340-382, 384-432, and 433-480; these read PDAC…WQGL, PSPV…ELGL, RFPV…WRGV, and PSEI…FFGC. Cysteines 294 and 480 form a disulfide.

This sequence belongs to the peptidase M10A family. Requires Ca(2+) as cofactor. It depends on Zn(2+) as a cofactor. In terms of processing, the precursor is cleaved by a furin endopeptidase. As to expression, specifically expressed in stromal cells of breast carcinomas.

The protein resides in the secreted. It is found in the extracellular space. It localises to the extracellular matrix. May play an important role in the progression of epithelial malignancies. In Homo sapiens (Human), this protein is Stromelysin-3 (MMP11).